The chain runs to 200 residues: Putative peroxiredoxin sll0755 (200 aa).

In terms of domain architecture, Thioredoxin spans L5 to H163. C50 acts as the Cysteine sulfenic acid (-SOH) intermediate in catalysis.

It belongs to the peroxiredoxin family. AhpC/Prx1 subfamily. As to quaternary structure, homodimer; disulfide-linked, upon oxidation.

Its subcellular location is the cytoplasm. It carries out the reaction a hydroperoxide + [thioredoxin]-dithiol = an alcohol + [thioredoxin]-disulfide + H2O. In terms of biological role, thiol-specific peroxidase that catalyzes the reduction of hydrogen peroxide and organic hydroperoxides to water and alcohols, respectively. Plays a role in cell protection against oxidative stress by detoxifying peroxides. In Synechocystis sp. (strain ATCC 27184 / PCC 6803 / Kazusa), this protein is Putative peroxiredoxin sll0755.